The sequence spans 471 residues: Membrane-associated sulfotransferase kil1 (471 aa).

The Cytoplasmic segment spans residues 1–12 (MSTTSMILTKKN). The helical; Signal-anchor for type II membrane protein transmembrane segment at 13 to 33 (IIILSIIIITIIAYQFYITSP) threads the bilayer. The Lumenal portion of the chain corresponds to 34 to 471 (QSFPSSNTIT…LLNRDFKWQN (438 aa)). N47 is a glycosylation site (N-linked (GlcNAc...) asparagine). 2 stretches are compositionally biased toward low complexity: residues 89 to 105 (NQNE…NNNK) and 112 to 127 (NNNN…NNNN). The segment at 89-127 (NQNENQNQINNEYNNNKLNDEQENNNNNNYNNNNNNNNN) is disordered. 3'-phosphoadenylyl sulfate-binding positions include 167–172 (KSGTTF), R252, and S260. 2 N-linked (GlcNAc...) asparagine glycosylation sites follow: N324 and N344. Y348 is a 3'-phosphoadenylyl sulfate binding site.

The protein belongs to the sulfotransferase 1 family.

It localises to the membrane. Sulfotransferase involved in intracellular killing of bacteria. This is Membrane-associated sulfotransferase kil1 (kil1) from Dictyostelium discoideum (Social amoeba).